An 811-amino-acid polypeptide reads, in one-letter code: G-type lectin S-receptor-like serine/threonine-protein kinase LECRK2 (811 aa).

The N-terminal stretch at 1-23 (MAPLLFLPILQLLLLYCTKSAQA) is a signal peptide. Positions 24–153 (QLNISIGSSL…DGATKWESFG (130 aa)) constitute a Bulb-type lectin domain. The Extracellular portion of the chain corresponds to 24–464 (QLNISIGSSL…DKKYWILGSS (441 aa)). N-linked (GlcNAc...) asparagine glycosylation is found at asparagine 26, asparagine 39, asparagine 59, asparagine 219, asparagine 226, asparagine 237, and asparagine 242. In terms of domain architecture, EGF-like; atypical spans 292 to 344 (PENICQTIQTKVGSGACGFNSYCTFDGTKNTTNCLCPQRYKFFDNERTYKGCR). 5 cysteine pairs are disulfide-bonded: cysteine 296/cysteine 314, cysteine 308/cysteine 325, cysteine 327/cysteine 343, cysteine 389/cysteine 411, and cysteine 393/cysteine 399. The N-linked (GlcNAc...) asparagine glycan is linked to asparagine 321. The PAN domain occupies 352–436 (CDLDETAAMV…LQATVLLKVP (85 aa)). A helical membrane pass occupies residues 465–485 (LFFGSSVLVNFLLIFVLLFGT). Residues 486-811 (YCSITSRKKT…DPSSYISSLA (326 aa)) lie on the Cytoplasmic side of the membrane. In terms of domain architecture, Protein kinase spans 521–795 (GGFHEVLGTG…KVMQMLDGAV (275 aa)). Residues 527–535 (LGTGASGIV) and lysine 551 contribute to the ATP site. The active-site Proton acceptor is the aspartate 645.

The protein belongs to the protein kinase superfamily. Ser/Thr protein kinase family.

It is found in the membrane. The catalysed reaction is L-seryl-[protein] + ATP = O-phospho-L-seryl-[protein] + ADP + H(+). It catalyses the reaction L-threonyl-[protein] + ATP = O-phospho-L-threonyl-[protein] + ADP + H(+). In terms of biological role, involved in resistance against the herbivorous insect brown planthopper (N.lugens, BPH). Member of the BPH3 (BPH resistance locus 3) cluster which contains LECRK1, LECRK2 and LECRK3. This is G-type lectin S-receptor-like serine/threonine-protein kinase LECRK2 from Oryza sativa subsp. japonica (Rice).